A 447-amino-acid polypeptide reads, in one-letter code: Methylenetetrahydrofolate--tRNA-(uracil-5-)-methyltransferase TrmFO (447 aa).

Gly-10–Gly-15 provides a ligand contact to FAD.

Belongs to the MnmG family. TrmFO subfamily. FAD serves as cofactor.

Its subcellular location is the cytoplasm. It catalyses the reaction uridine(54) in tRNA + (6R)-5,10-methylene-5,6,7,8-tetrahydrofolate + NADH + H(+) = 5-methyluridine(54) in tRNA + (6S)-5,6,7,8-tetrahydrofolate + NAD(+). It carries out the reaction uridine(54) in tRNA + (6R)-5,10-methylene-5,6,7,8-tetrahydrofolate + NADPH + H(+) = 5-methyluridine(54) in tRNA + (6S)-5,6,7,8-tetrahydrofolate + NADP(+). Its function is as follows. Catalyzes the folate-dependent formation of 5-methyl-uridine at position 54 (M-5-U54) in all tRNAs. This chain is Methylenetetrahydrofolate--tRNA-(uracil-5-)-methyltransferase TrmFO, found in Lactococcus lactis subsp. lactis (strain IL1403) (Streptococcus lactis).